We begin with the raw amino-acid sequence, 100 residues long: Putative pterin-4-alpha-carbinolamine dehydratase (100 aa).

This sequence belongs to the pterin-4-alpha-carbinolamine dehydratase family.

It catalyses the reaction (4aS,6R)-4a-hydroxy-L-erythro-5,6,7,8-tetrahydrobiopterin = (6R)-L-erythro-6,7-dihydrobiopterin + H2O. This chain is Putative pterin-4-alpha-carbinolamine dehydratase, found in Bradyrhizobium sp. (strain ORS 278).